The chain runs to 43 residues: Cytochrome b559 subunit beta (43 aa).

The helical transmembrane segment at 18–34 threads the bilayer; sequence WLSVHALGIPTIFFLGA. His22 contacts heme.

The protein belongs to the PsbE/PsbF family. Heterodimer of an alpha subunit and a beta subunit. PSII is composed of 1 copy each of membrane proteins PsbA, PsbB, PsbC, PsbD, PsbE, PsbF, PsbH, PsbI, PsbJ, PsbK, PsbL, PsbM, PsbT, PsbX, PsbY, PsbZ, Psb30/Ycf12, at least 3 peripheral proteins of the oxygen-evolving complex and a large number of cofactors. It forms dimeric complexes. The cofactor is heme b.

The protein resides in the plastid. The protein localises to the chloroplast thylakoid membrane. Functionally, this b-type cytochrome is tightly associated with the reaction center of photosystem II (PSII). PSII is a light-driven water:plastoquinone oxidoreductase that uses light energy to abstract electrons from H(2)O, generating O(2) and a proton gradient subsequently used for ATP formation. It consists of a core antenna complex that captures photons, and an electron transfer chain that converts photonic excitation into a charge separation. The protein is Cytochrome b559 subunit beta of Stigeoclonium helveticum (Green alga).